A 437-amino-acid polypeptide reads, in one-letter code: Sulfite reductase, dissimilatory-type subunit alpha (437 aa).

8 residues coordinate [4Fe-4S] cluster: Cys-177, Cys-183, Cys-221, Cys-225, Cys-284, Cys-303, Cys-306, and Cys-309. Residues 294–322 (SKLSIDNKECVRCMHCINTMPRALHIGDE) enclose the 4Fe-4S ferredoxin-type domain.

Heterohexamer of two alpha, two beta and two gamma subunits.

Its function is as follows. Part of the complex that catalyzes the reduction of sulfite to sulfide. The alpha and beta subunits may have arisen by gene duplication. They both bind 2 iron-sulfur clusters, but the alpha subunit seems to be catalytically inactive, due to substitutions along the putative substrate access channel, and because it binds sirohydrochlorin (the dematallated form of siroheme) instead of siroheme. The polypeptide is Sulfite reductase, dissimilatory-type subunit alpha (dsvA) (Nitratidesulfovibrio vulgaris (strain ATCC 29579 / DSM 644 / CCUG 34227 / NCIMB 8303 / VKM B-1760 / Hildenborough) (Desulfovibrio vulgaris)).